Consider the following 282-residue polypeptide: HTH-type transcriptional activator RhaR (282 aa).

The region spanning 179 to 277 is the HTH araC/xylS-type domain; it reads DKLITALAGS…GMTPVQWRHR (99 aa). 2 DNA-binding regions (H-T-H motif) span residues 196–217 and 244–267; these read EKFC…RTQT and VSEV…NREV.

Binds DNA as a dimer.

The protein localises to the cytoplasm. In terms of biological role, activates expression of the rhaSR operon in response to L-rhamnose. In Enterobacter sp. (strain 638), this protein is HTH-type transcriptional activator RhaR.